A 177-amino-acid polypeptide reads, in one-letter code: Meiotic chromosome segregation protein C17A2.07c (177 aa).

A disordered region spans residues E71–L90. Positions S74–P86 are enriched in basic and acidic residues.

It localises to the nucleus. In terms of biological role, involved in meiotic chromosome segregation. In Schizosaccharomyces pombe (strain 972 / ATCC 24843) (Fission yeast), this protein is Meiotic chromosome segregation protein C17A2.07c.